The primary structure comprises 475 residues: Solute carrier family 46 member 2 (475 aa).

Residues 1–23 (MSPEVTCPRRGHLPRFHPRTWVE) lie on the Cytoplasmic side of the membrane. A helical membrane pass occupies residues 24 to 44 (PVVASSQVAASLYDAGLLLVV). The Extracellular segment spans residues 45–78 (KASYGTGGSSNHSASPSPRGALEDQQQRAISNFY). N-linked (GlcNAc...) asparagine glycosylation is present at N55. The helical transmembrane segment at 79-99 (IIYNLVVGLSPLLSAYGLGWL) threads the bilayer. At 100 to 108 (SDRYHRKIS) the chain is on the cytoplasmic side. Residues 109-129 (ICMSLLGFLLSRLGLLLKVLL) form a helical membrane-spanning segment. The Extracellular portion of the chain corresponds to 130–138 (DWPVEVLYG). A helical membrane pass occupies residues 139-159 (AAALNGLFGGFSAFWSGVMAL). The Cytoplasmic segment spans residues 160-172 (GSLGSSEGRRSVR). The helical transmembrane segment at 173 to 193 (LILIDLMLGLAGFCGSMASGH) threads the bilayer. The Extracellular portion of the chain corresponds to 194 to 205 (LFKQMAGHSGQG). A helical transmembrane segment spans residues 206–226 (LILTACSVSCASFALLYSLLV). Topologically, residues 227–282 (LKVPESVAKPSQELPAVDTVSGTVGTYRTLDPDQLDQQYAVGHPPSPGKAKPHKTT) are cytoplasmic. The helical transmembrane segment at 283–303 (IALLFVGAIIYDLAVVGTVDV) threads the bilayer. The Extracellular portion of the chain corresponds to 304–320 (IPLFVLREPLGWNQVQV). The helical transmembrane segment at 321 to 341 (GYGMAAGYTIFITSFLGVLVF) threads the bilayer. Residues 342–347 (SRCFRD) lie on the Cytoplasmic side of the membrane. The helical transmembrane segment at 348–368 (TTMIMIGMVSFGSGALLLAFV) threads the bilayer. The Extracellular portion of the chain corresponds to 369 to 370 (KE). The chain crosses the membrane as a helical span at residues 371–391 (TYMFYIARAVMLFALIPVTTI). Topologically, residues 392-406 (RSAMSKLIKGSSYGK) are cytoplasmic. A helical transmembrane segment spans residues 407 to 427 (VFVILQLSLALTGVVTSTLYN). The Extracellular segment spans residues 428 to 435 (KIYQLTMD). A helical transmembrane segment spans residues 436 to 456 (MFVGSCFALSSFLSFLAIIPI). The Cytoplasmic portion of the chain corresponds to 457 to 475 (SIVAYKQVPLSPYGDIIEK).

It belongs to the major facilitator superfamily. SLC46A family. Post-translationally, glycosylated. In terms of tissue distribution, strongly expressed in the adult thymus. Expressed in spleen, lymph nodes, thymus, PBL, bone marrow and fetal liver. Expressed in monocytes and pre-dendridic cells.

The protein localises to the endosome membrane. The protein resides in the cell membrane. It catalyses the reaction N-acetyl-beta-D-glucosaminyl-(1-&gt;4)-1,6-anhydro-N-acetyl-beta-D-muramoyl-L-alanyl-gamma-D-glutamyl-meso-2,6-diaminopimeloyl-D-alanine(out) + n H(+)(out) = N-acetyl-beta-D-glucosaminyl-(1-&gt;4)-1,6-anhydro-N-acetyl-beta-D-muramoyl-L-alanyl-gamma-D-glutamyl-meso-2,6-diaminopimeloyl-D-alanine(in) + n H(+)(in). The catalysed reaction is L-alanyl-gamma-D-glutamyl-meso-2,6-diaminopimelate(out) + n H(+)(out) = L-alanyl-gamma-D-glutamyl-meso-2,6-diaminopimelate(in) + n H(+)(in). The enzyme catalyses N-acetyl-D-muramoyl-L-alanyl-D-isoglutamine(out) + n H(+)(out) = N-acetyl-D-muramoyl-L-alanyl-D-isoglutamine(in) + n H(+)(in). It carries out the reaction 2',3'-cGAMP(out) + n H(+)(out) = 2',3'-cGAMP(in) + n H(+)(in). It catalyses the reaction 3',3'-cGAMP(out) + n H(+)(out) = 3',3'-cGAMP(in) + n H(+)(in). Functionally, proton-coupled transporter that delivers pathogen-associated or danger-associated molecular patterns to cytosolic pattern recognition receptors as part of the innate immune response to microbes or tissue injury. Has selectivity toward muropeptides that contain the amino acid diaminopimelic acid (DAP-type peptidoglycan muropeptides) including Tri-DAP and tracheal toxin (TCT), common in Gram-negative bacteria and Gram-positive bacilli. In the context of immune recognition of skin microbiota, shuttles bacterial muropeptides across the endolysosomal membranes into the cytosol for recognition by NOD1, triggering MYD88-dependent secretion of IL1A and neutrophil recruitment in a pyroptosis-type inflammatory process. To a lesser extent and redundantly, transports muramyl dipeptides derived from most bacterial proteoglycans, eliciting NOD2 receptor activation and downstream inflammatory responses. Postulated to function as a dominant importer of cyclic GMP-AMP dinucleotides (cGAMPs) in monocyte and macrophage cell lineages. Selectively imports cGAMPs derived from pathogenic bacteria such as 3'3'-cGAMP thus providing for differential immune recognition of pathogenic versus commensal bacteria. During tumorigenesis may transport extracellular tumor-derived 2'3'-cGAMP across the plasma membrane of M1-polarized macrophages to activate the anti-tumoral stimulator of interferon genes (STING) pathway. The transport mechanism, its electrogenicity and stoichiometry remain to be elucidated. This chain is Solute carrier family 46 member 2, found in Homo sapiens (Human).